We begin with the raw amino-acid sequence, 507 residues long: Probable cyclic di-GMP phosphodiesterase PdeG (507 aa).

The next 2 membrane-spanning stretches (helical) occupy residues 4 to 24 (TLIP…ILNI) and 217 to 237 (LIDK…AAAF). Positions 246–500 (SATPEEILRR…DLVKIILSKP (255 aa)) constitute an EAL domain.

It is found in the cell membrane. The catalysed reaction is 3',3'-c-di-GMP + H2O = 5'-phosphoguanylyl(3'-&gt;5')guanosine + H(+). In terms of biological role, phosphodiesterase (PDE) that catalyzes the hydrolysis of cyclic-di-GMP (c-di-GMP) to 5'-pGpG. The protein is Probable cyclic di-GMP phosphodiesterase PdeG of Escherichia coli (strain K12).